The primary structure comprises 350 residues: Ion-translocating oxidoreductase complex subunit D (350 aa).

The next 4 membrane-spanning stretches (helical) occupy residues 37–57, 78–109, 124–144, and 158–178; these read YYFG…AYLA, ALVT…IVIV, AMAA…SWVA, and TFNS…HLAI. Threonine 185 bears the FMN phosphoryl threonine mark. 5 helical membrane-spanning segments follow: residues 212 to 232, 239 to 259, 264 to 284, 298 to 318, and 319 to 339; these read SVGE…LVML, WHIS…GFLI, FVSP…FFIA, LIFG…GGYP, and DAVA…DYYV.

It belongs to the NqrB/RnfD family. In terms of assembly, the complex is composed of six subunits: RnfA, RnfB, RnfC, RnfD, RnfE and RnfG. Requires FMN as cofactor.

It is found in the cell inner membrane. Functionally, part of a membrane-bound complex that couples electron transfer with translocation of ions across the membrane. This is Ion-translocating oxidoreductase complex subunit D from Shewanella frigidimarina (strain NCIMB 400).